The chain runs to 440 residues: 5-hydroxytryptamine receptor 6 (440 aa).

The Extracellular segment spans residues 1–27 (MVPEPGPTANSTPAWGAGPPSAPGGSG). The helical transmembrane segment at 28–52 (WVAAALCVVIALTAAANSLLIALIC) threads the bilayer. Residues 53–62 (TQPALRNTSN) are Cytoplasmic-facing. The chain crosses the membrane as a helical span at residues 63–88 (FFLVSLFTSDLMVGLVVMPPAMLNAL). At 89 to 96 (YGRWVLAR) the chain is on the extracellular side. A helical transmembrane segment spans residues 97-122 (GLCLLWTAFDVMCCSASILNLCLISL). C99 and C180 are joined by a disulfide. D106 contributes to the serotonin binding site. At 123 to 142 (DRYLLILSPLRYKLRMTPLR) the chain is on the cytoplasmic side. Residues 143 to 167 (ALALVLGAWSLAALASFLPLLLGWH) form a helical membrane-spanning segment. Residues 168-185 (ELGHARPPVPGQCRLLAS) are Extracellular-facing. A helical transmembrane segment spans residues 186 to 209 (LPFVLVASGLTFFLPSGAICFTYC). The Cytoplasmic portion of the chain corresponds to 210–266 (RILLAARKQAVQVASLTTGMASQASETLQVPRTPRPGVESADSRRLATKHSRKALKA). A helical transmembrane segment spans residues 267–293 (SLTLGILLGMFFVTWLPFFVANIVQAV). Serotonin is bound at residue N288. The Extracellular portion of the chain corresponds to 294–299 (CDCISP). A helical transmembrane segment spans residues 300–323 (GLFDVLTWLGYCNSTMNPIIYPLF). The Cytoplasmic portion of the chain corresponds to 324–440 (MRDFKRALGR…RPHPLGIPTN (117 aa)). Residues 346–392 (ASLASPSLRTSHSGPRPGLSLQQVLPLPLPPDSDSDSDAGSGGSSGL) are disordered. The segment covering 347–358 (SLASPSLRTSHS) has biased composition (polar residues). Positions 362-371 (PGLSLQQVLP) are enriched in low complexity.

Belongs to the G-protein coupled receptor 1 family. As to quaternary structure, interacts with MTOR, RPTOR and NF1. Interacts with CDK5. Expressed in several human brain regions, most prominently in the caudate nucleus.

It localises to the cell membrane. In terms of biological role, G-protein coupled receptor for 5-hydroxytryptamine (serotonin), a biogenic hormone that functions as a neurotransmitter, a hormone and a mitogen. Also has a high affinity for tricyclic psychotropic drugs. Ligand binding causes a conformation change that triggers signaling via guanine nucleotide-binding proteins (G proteins) and modulates the activity of downstream effectors. HTR6 is coupled to G(s) G alpha proteins and mediates activation of adenylate cyclase activity. Controls pyramidal neurons migration during corticogenesis, through the regulation of CDK5 activity. Is an activator of mTOR signaling. The chain is 5-hydroxytryptamine receptor 6 from Homo sapiens (Human).